A 373-amino-acid polypeptide reads, in one-letter code: tRNA-specific 2-thiouridylase MnmA (373 aa).

ATP is bound by residues 7–14 and leucine 33; that span reads AMSGGVDS. The active-site Nucleophile is the cysteine 101. Cysteine 101 and cysteine 215 form a disulfide bridge. Glycine 125 is a binding site for ATP. The segment at 165–167 is interaction with tRNA; it reads KDQ. Cysteine 215 acts as the Cysteine persulfide intermediate in catalysis.

The protein belongs to the MnmA/TRMU family.

It is found in the cytoplasm. It catalyses the reaction S-sulfanyl-L-cysteinyl-[protein] + uridine(34) in tRNA + AH2 + ATP = 2-thiouridine(34) in tRNA + L-cysteinyl-[protein] + A + AMP + diphosphate + H(+). Functionally, catalyzes the 2-thiolation of uridine at the wobble position (U34) of tRNA, leading to the formation of s(2)U34. The sequence is that of tRNA-specific 2-thiouridylase MnmA from Roseiflexus sp. (strain RS-1).